Reading from the N-terminus, the 301-residue chain is Formylmethanofuran--tetrahydromethanopterin formyltransferase-like protein (301 aa).

Belongs to the FTR family.

The protein is Formylmethanofuran--tetrahydromethanopterin formyltransferase-like protein of Archaeoglobus fulgidus (strain ATCC 49558 / DSM 4304 / JCM 9628 / NBRC 100126 / VC-16).